Here is a 135-residue protein sequence, read N- to C-terminus: Sex-regulated protein janus-A (135 aa).

Substrate is bound at residue Lys-37. His-63 functions as the Proton acceptor in the catalytic mechanism. 104–106 contributes to the substrate binding site; it reads SQG.

The protein belongs to the janus family.

In terms of biological role, janA and janB regulate somatic sex differentiation. The sequence is that of Sex-regulated protein janus-A (janA) from Drosophila mauritiana (Fruit fly).